Here is an 803-residue protein sequence, read N- to C-terminus: Exocyst complex component 6 (803 aa).

It belongs to the SEC15 family. In terms of assembly, the exocyst complex is composed of EXOC1, EXOC2, EXOC3, EXOC4, EXOC5, EXOC6, EXOC7 and EXOC8. Interacts with CNTRL. Interacts with RAB11A in a GTP-dependent manner.

Its subcellular location is the cytoplasm. The protein resides in the perinuclear region. It localises to the cell projection. The protein localises to the growth cone. It is found in the midbody. Its subcellular location is the midbody ring. Functionally, component of the exocyst complex involved in the docking of exocytic vesicles with fusion sites on the plasma membrane. Together with RAB11A, RAB3IP, RAB8A, PARD3, PRKCI, ANXA2, CDC42 and DNMBP promotes transcytosis of PODXL to the apical membrane initiation sites (AMIS), apical surface formation and lumenogenesis. In Canis lupus familiaris (Dog), this protein is Exocyst complex component 6 (EXOC6).